The following is a 262-amino-acid chain: tRNA pseudouridine synthase A (262 aa).

The active-site Nucleophile is the Asp-51. Position 109 (Tyr-109) interacts with substrate.

Belongs to the tRNA pseudouridine synthase TruA family. Homodimer.

It carries out the reaction uridine(38/39/40) in tRNA = pseudouridine(38/39/40) in tRNA. Formation of pseudouridine at positions 38, 39 and 40 in the anticodon stem and loop of transfer RNAs. The sequence is that of tRNA pseudouridine synthase A from Actinobacillus pleuropneumoniae serotype 3 (strain JL03).